The primary structure comprises 1459 residues: ARF guanine-nucleotide exchange factor 2 (1459 aa).

Residues serine 46 and serine 284 each carry the phosphoserine modification. Positions 570 to 714 (FNEKPKKGIP…IIMLNTDLHN (145 aa)) constitute an SEC7 domain. The disordered stretch occupies residues 1412 to 1459 (EKGNGSSSHGSAHEQTPESNDVEIEATAPIDDNTDDDNKPKLSDVEKD). Positions 1447–1459 (DDNKPKLSDVEKD) are enriched in basic and acidic residues.

Interacts (via SEC7 domain) with DRS2 (via C-terminus); the interaction is direct. Interacts with GMH1.

The protein resides in the cytoplasm. It is found in the cytosol. It localises to the membrane. The protein localises to the golgi apparatus membrane. Its function is as follows. Activates the ARF proteins by exchanging bound GDP for free GTP. Plays a role in maintaining mitochondrial morphology. Stimulates DRS2 flippase activity. This chain is ARF guanine-nucleotide exchange factor 2 (GEA2), found in Saccharomyces cerevisiae (strain ATCC 204508 / S288c) (Baker's yeast).